An 85-amino-acid chain; its full sequence is MKRTNIYLDEEQTASLDKLAAQEGVSRAELIRLLLNRALTTAGDDLASDLQAINDSFGTLRHLDPPVRRSGGREQHLAQVWRATS.

The segment covering 64-76 (DPPVRRSGGREQH) has biased composition (basic and acidic residues). Positions 64–85 (DPPVRRSGGREQHLAQVWRATS) are disordered.

This is an uncharacterized protein from Mycobacterium bovis (strain ATCC BAA-935 / AF2122/97).